Reading from the N-terminus, the 144-residue chain is Large ribosomal subunit protein uL15 (144 aa).

Positions 1 to 57 (MKLNDLSPAPGSRREKHRPGRGIGSGLGKTGGRGHKGQTSRSGGSIAPGFEGGQQPL) are disordered. Positions 21–31 (RGIGSGLGKTG) are enriched in gly residues.

The protein belongs to the universal ribosomal protein uL15 family. Part of the 50S ribosomal subunit.

In terms of biological role, binds to the 23S rRNA. This chain is Large ribosomal subunit protein uL15, found in Pseudomonas putida (strain ATCC 700007 / DSM 6899 / JCM 31910 / BCRC 17059 / LMG 24140 / F1).